We begin with the raw amino-acid sequence, 163 residues long: Aspartate 1-decarboxylase (163 aa).

The active-site Schiff-base intermediate with substrate; via pyruvic acid is serine 25. Serine 25 bears the Pyruvic acid (Ser) mark. A substrate-binding site is contributed by threonine 57. Tyrosine 58 functions as the Proton donor in the catalytic mechanism. Substrate is bound at residue 73–75 (GAA).

The protein belongs to the PanD family. In terms of assembly, heterooctamer of four alpha and four beta subunits. Requires pyruvate as cofactor. In terms of processing, is synthesized initially as an inactive proenzyme, which is activated by self-cleavage at a specific serine bond to produce a beta-subunit with a hydroxyl group at its C-terminus and an alpha-subunit with a pyruvoyl group at its N-terminus.

It localises to the cytoplasm. It carries out the reaction L-aspartate + H(+) = beta-alanine + CO2. It functions in the pathway cofactor biosynthesis; (R)-pantothenate biosynthesis; beta-alanine from L-aspartate: step 1/1. In terms of biological role, catalyzes the pyruvoyl-dependent decarboxylation of aspartate to produce beta-alanine. This is Aspartate 1-decarboxylase from Saccharopolyspora erythraea (strain ATCC 11635 / DSM 40517 / JCM 4748 / NBRC 13426 / NCIMB 8594 / NRRL 2338).